A 141-amino-acid chain; its full sequence is Hemoglobin subunit alpha-1 (141 aa).

Residues 1 to 141 (VLSPEDKNNV…VSTVLTSKYR (141 aa)) enclose the Globin domain. Histidine 58 contributes to the O2 binding site. Histidine 87 contributes to the heme b binding site.

The protein belongs to the globin family. As to quaternary structure, heterotetramer of two alpha chains and two beta chains. Red blood cells.

In terms of biological role, involved in oxygen transport from the lung to the various peripheral tissues. The protein is Hemoglobin subunit alpha-1 of Tadarida brasiliensis (Brazilian free-tailed bat).